Here is a 1502-residue protein sequence, read N- to C-terminus: tRNA (32-2'-O)-methyltransferase regulator trm732 (1502 aa).

This sequence belongs to the THADA family.

It localises to the cytoplasm. It is found in the nucleus. Its function is as follows. Together with methyltransferase trm7, methylates the 2'-O-ribose of nucleotides at position 32 of the anticodon loop of substrate tRNAs. The sequence is that of tRNA (32-2'-O)-methyltransferase regulator trm732 from Schizosaccharomyces pombe (strain 972 / ATCC 24843) (Fission yeast).